The sequence spans 173 residues: 16S rRNA aminocarboxypropyltransferase (173 aa).

Residues T25, L72, L96, and S115 each contribute to the S-adenosyl-L-methionine site.

The protein belongs to the TDD superfamily. TSR3 family.

Its subcellular location is the cytoplasm. It catalyses the reaction an N(1)-methylpseudouridine in rRNA + S-adenosyl-L-methionine = N(1)-methyl-N(3)-[(3S)-3-amino-3-carboxypropyl]pseudouridine in rRNA + S-methyl-5'-thioadenosine + H(+). Functionally, aminocarboxypropyltransferase that catalyzes the aminocarboxypropyl transfer on pseudouridine corresponding to position 914 in M.jannaschii 16S rRNA. It constitutes the last step in biosynthesis of the hypermodified N1-methyl-N3-(3-amino-3-carboxypropyl) pseudouridine (m1acp3-Psi). In Methanosarcina mazei (strain ATCC BAA-159 / DSM 3647 / Goe1 / Go1 / JCM 11833 / OCM 88) (Methanosarcina frisia), this protein is 16S rRNA aminocarboxypropyltransferase.